A 261-amino-acid polypeptide reads, in one-letter code: Putative glyoxylase CFP32 (261 aa).

VOC domains follow at residues 11–129 (TPNW…LWQA) and 143–257 (TLIW…VLKP). Glyoxalase regions lie at residues 13–123 (NWVD…TGAA) and 149–252 (LLTD…GAIF).

The protein is Putative glyoxylase CFP32 of Mycobacterium bovis (strain ATCC BAA-935 / AF2122/97).